The following is a 157-amino-acid chain: UPF0756 membrane protein BH3161 (157 aa).

Transmembrane regions (helical) follow at residues 1–21 (MISQ…LAKN), 54–74 (LGVT…EIGF), 87–107 (WVAL…IDLL), and 117–137 (LVLG…GPLI).

Belongs to the UPF0756 family.

It localises to the cell membrane. This is UPF0756 membrane protein BH3161 from Halalkalibacterium halodurans (strain ATCC BAA-125 / DSM 18197 / FERM 7344 / JCM 9153 / C-125) (Bacillus halodurans).